We begin with the raw amino-acid sequence, 435 residues long: uncharacterized protein (435 aa).

The next 12 membrane-spanning stretches (helical) occupy residues 14–34, 44–64, 84–104, 123–143, 153–173, 187–207, 224–244, 267–287, 324–344, 346–366, 375–395, and 400–420; these read VSMA…GVGA, TFIL…KLGA, IITG…IALF, FNIA…NFFG, FIVL…LITI, VSGM…FGVI, AIFI…ISAI, FLGN…ISSA, LYIT…EGVA, ITSA…YILI, IVIF…YYQW, and FVFY…IIYR.

It is found in the cell membrane. This is an uncharacterized protein from Methanocaldococcus jannaschii (strain ATCC 43067 / DSM 2661 / JAL-1 / JCM 10045 / NBRC 100440) (Methanococcus jannaschii).